The chain runs to 1342 residues: DNA-directed RNA polymerase subunit beta (1342 aa).

It belongs to the RNA polymerase beta chain family. In terms of assembly, the RNAP catalytic core consists of 2 alpha, 1 beta, 1 beta' and 1 omega subunit. When a sigma factor is associated with the core the holoenzyme is formed, which can initiate transcription.

It carries out the reaction RNA(n) + a ribonucleoside 5'-triphosphate = RNA(n+1) + diphosphate. Functionally, DNA-dependent RNA polymerase catalyzes the transcription of DNA into RNA using the four ribonucleoside triphosphates as substrates. The sequence is that of DNA-directed RNA polymerase subunit beta from Vibrio vulnificus (strain CMCP6).